A 284-amino-acid chain; its full sequence is Fructosamine kinase FrlD (284 aa).

Belongs to the carbohydrate kinase PfkB family.

In terms of biological role, catalyzes the phosphorylation of a range of fructosamines to fructosamine 6-phosphates. In Bacillus subtilis (strain 168), this protein is Fructosamine kinase FrlD (frlD).